We begin with the raw amino-acid sequence, 438 residues long: tRNA wybutosine-synthesizing protein 2 homolog (438 aa).

Residues S209, K216, E256, and 284–285 each bind S-adenosyl-L-methionine; that span reads DN.

The protein belongs to the class I-like SAM-binding methyltransferase superfamily. TRM5/TYW2 family.

It catalyses the reaction 4-demethylwyosine(37) in tRNA(Phe) + S-adenosyl-L-methionine = 4-demethyl-7-[(3S)-3-amino-3-carboxypropyl]wyosine(37) in tRNA(Phe) + S-methyl-5'-thioadenosine + H(+). Its pathway is tRNA modification; wybutosine-tRNA(Phe) biosynthesis. Functionally, S-adenosyl-L-methionine-dependent transferase that acts as a component of the wybutosine biosynthesis pathway. Wybutosine is a hyper modified guanosine with a tricyclic base found at the 3'-position adjacent to the anticodon of eukaryotic phenylalanine tRNA. Catalyzes the transfer of the alpha-amino-alpha-carboxypropyl (acp) group from S-adenosyl-L-methionine to the C-7 position of 4-demethylwyosine (imG-14) to produce wybutosine-86. This Bos taurus (Bovine) protein is tRNA wybutosine-synthesizing protein 2 homolog (TRMT12).